The chain runs to 688 residues: Glycine--tRNA ligase beta subunit (688 aa).

Belongs to the class-II aminoacyl-tRNA synthetase family. Tetramer of two alpha and two beta subunits.

The protein localises to the cytoplasm. The enzyme catalyses tRNA(Gly) + glycine + ATP = glycyl-tRNA(Gly) + AMP + diphosphate. This Geotalea uraniireducens (strain Rf4) (Geobacter uraniireducens) protein is Glycine--tRNA ligase beta subunit.